A 436-amino-acid polypeptide reads, in one-letter code: UPF0597 protein YhaM (436 aa).

The protein belongs to the UPF0597 family.

In terms of biological role, thought to be a D-serine dehydratase, however it does not complement a dsdA (D-serine dehydratase) mutant in strain CFT073, suggesting it may not have that function. The sequence is that of UPF0597 protein YhaM from Escherichia coli O157:H7.